A 481-amino-acid polypeptide reads, in one-letter code: Guanine nucleotide exchange factor C9orf72 homolog (481 aa).

Residues 23–194 (SPLLAATFAY…ELLASMRSHS (172 aa)) enclose the uDENN C9ORF72-type domain. One can recognise a cDENN C9ORF72-type domain in the interval 200–343 (DIADTVLNDD…SELTAFWRAT (144 aa)). The dDENN C9ORF72-type domain maps to 370-464 (VLHRDTLVKA…IKPGLHSFIF (95 aa)). The interval 461 to 481 (SFIFGRPFYTSVQERDVLMTF) is required for the homodimerization of the C9orf72-SMCR8 complex.

Component of the C9orf72-SMCR8 complex, at least composed of C9orf72, SMCR8 and WDR41. The complex is formed of two protomers, each individually consisting of one molecule each of C9orf72, SMCR8 and WDR41. The protomers homodimerize via an interaction between C9orf72 (via C-terminus) and SMCR8 (via N-terminus). Within each protomer SMCR8 (via DENN domain) acts as a bridging protein between WDR41 (via C-terminus and N-terminus) and C9orf72 (via C-terminus). The C9orf72-SMCR8 complex associates with the ULK1/ATG1 kinase complex. Interacts with ULK1/ATG1 kinase complex members ULK1, ATG13 and RB1CC1. Interacts with SMCR8; the interaction is direct. Interacts with HNRNPA1, HNRNPA2B1 and UBQLN2. Interacts with small Rab GTPase RAB1A; the interaction mediates recruitment of RAB1A to the ULK1/ATG1 kinase complex. Also interacts with small Rab GTPase RAB7A. Interacts with cofilin. Interacts with GTP-binding proteins ARF1 and ARF6. Interacts with the DLG4/PSD-95. Interacts with CARM1 (via PH domain-like fold). Interacts with RAB39A and RAB39B (in GDP-bound forms); functions as GEF for RAB39A and RAB39B.

The protein resides in the nucleus. It is found in the cytoplasm. The protein localises to the P-body. Its subcellular location is the stress granule. It localises to the endosome. The protein resides in the lysosome. It is found in the cytoplasmic vesicle. The protein localises to the autophagosome. Its subcellular location is the autolysosome. It localises to the secreted. The protein resides in the cell projection. It is found in the axon. The protein localises to the growth cone. Its subcellular location is the perikaryon. Its function is as follows. Acts as a guanine-nucleotide releasing factor (GEF) for Rab GTPases by promoting the conversion of inactive RAB-GDP to the active form RAB-GTP. Acts as a GEF for RAB39A which enables HOPS-mediated autophagosome-lysosome membrane tethering and fusion in mammalian autophagy. Component of the C9orf72-SMCR8 complex where both subunits display GEF activity and that regulates autophagy. As part of the C9orf72-SMCR8-WDR41 (CSW) complex, functions as GEF for RAB8A and RAB39B, thereby promoting autophagosome maturation. As part of the C9orf72-SMCR8 complex, also functions as GTPase activating protein (GAP) for RAB8A and RAB11A in vitro. The C9orf72-SMCR8 complex also acts as a regulator of autophagy initiation by interacting with the ULK1/ATG1 kinase complex and modulating its protein kinase activity. Promotes initiation of autophagy by regulating the RAB1A-dependent trafficking of the ULK1/ATG1 kinase complex to the phagophore which leads to autophagosome formation. Acts as a regulator of mTORC1 signaling by promoting phosphorylation of mTORC1 substrates. Plays a role in endosomal trafficking. May be involved in regulating the maturation of phagosomes to lysosomes. Promotes the lysosomal localization and lysosome-mediated degradation of CARM1 which leads to inhibition of starvation-induced lipid metabolism. Regulates actin dynamics in motor neurons by inhibiting the GTP-binding activity of ARF6, leading to ARF6 inactivation. This reduces the activity of the LIMK1 and LIMK2 kinases which are responsible for phosphorylation and inactivation of cofilin, leading to CFL1/cofilin activation. Positively regulates axon extension and axon growth cone size in spinal motor neurons. Required for SMCR8 protein expression and localization at pre- and post-synaptic compartments in the forebrain, also regulates protein abundance of RAB3A and GRIA1/GLUR1 in post-synaptic compartments in the forebrain and hippocampus. Plays a role within the hematopoietic system in restricting inflammation and the development of autoimmunity. This Rattus norvegicus (Rat) protein is Guanine nucleotide exchange factor C9orf72 homolog.